The chain runs to 415 residues: Casein kinase I isoform delta (415 aa).

Positions 9–277 (YRLGRKIGSG…YLRQLFRNLF (269 aa)) constitute a Protein kinase domain. ATP contacts are provided by residues 15-23 (IGSGSFGDI) and lysine 38. Aspartate 128 acts as the Proton acceptor in catalysis. The span at 301–315 (AEDAERERREREERL) shows a compositional bias: basic and acidic residues. Residues 301-415 (AEDAERERRE…SSGLPSTVHR (115 aa)) are disordered. The interval 317–342 (HTRNPAVRGLPSTASGRLRGTQEVTP) is autoinhibitory. The span at 341-352 (TPSTPLTPTSHT) shows a compositional bias: low complexity. Positions 380 to 415 (NVSSSDLTSRQDTSRMSTSQIPSRVTSSGLPSTVHR) are enriched in polar residues.

The protein belongs to the protein kinase superfamily. Monomer. Interacts with per1 and per2. Component of the circadian core oscillator. Post-translationally, autophosphorylated on serine and threonine residues. As to expression, detected in retina photoreceptor cells.

It is found in the cytoplasm. It localises to the nucleus. The enzyme catalyses L-seryl-[protein] + ATP = O-phospho-L-seryl-[protein] + ADP + H(+). It carries out the reaction L-threonyl-[protein] + ATP = O-phospho-L-threonyl-[protein] + ADP + H(+). The catalysed reaction is L-seryl-[tau protein] + ATP = O-phospho-L-seryl-[tau protein] + ADP + H(+). It catalyses the reaction L-threonyl-[tau protein] + ATP = O-phospho-L-threonyl-[tau protein] + ADP + H(+). With respect to regulation, exhibits substrate-dependent heparin activation. Casein kinases are operationally defined by their preferential utilization of acidic proteins such as caseins as substrates. Can phosphorylate a large number of proteins. Central component of the circadian clock. May act as a negative regulator of circadian rhythmicity by phosphorylating per1 and per2, which may lead to their degradation. Participates in wnt signaling. Its function is as follows. Has no kinase activity. The chain is Casein kinase I isoform delta (csnk1d) from Xenopus laevis (African clawed frog).